The primary structure comprises 784 residues: 5-methyltetrahydropteroyltriglutamate--homocysteine methyltransferase (784 aa).

5-methyltetrahydropteroyltri-L-glutamate-binding positions include 16–19 (RELK) and Lys112. Residues 460–462 (IGS) and Glu513 contribute to the L-homocysteine site. L-methionine is bound by residues 460–462 (IGS) and Glu513. Trp590 is a binding site for 5-methyltetrahydropteroyltri-L-glutamate. Residue Asp628 coordinates L-homocysteine. Position 628 (Asp628) interacts with L-methionine. Glu634 is a 5-methyltetrahydropteroyltri-L-glutamate binding site. Zn(2+) is bound by residues His670, Cys672, and Glu694. The active-site Proton donor is His723. Cys755 lines the Zn(2+) pocket.

The protein belongs to the vitamin-B12 independent methionine synthase family. It depends on Zn(2+) as a cofactor.

It catalyses the reaction 5-methyltetrahydropteroyltri-L-glutamate + L-homocysteine = tetrahydropteroyltri-L-glutamate + L-methionine. It participates in amino-acid biosynthesis; L-methionine biosynthesis via de novo pathway; L-methionine from L-homocysteine (MetE route): step 1/1. Functionally, catalyzes the transfer of a methyl group from 5-methyltetrahydrofolate to homocysteine resulting in methionine formation. This chain is 5-methyltetrahydropteroyltriglutamate--homocysteine methyltransferase, found in Acidithiobacillus ferrooxidans (strain ATCC 23270 / DSM 14882 / CIP 104768 / NCIMB 8455) (Ferrobacillus ferrooxidans (strain ATCC 23270)).